The following is a 216-amino-acid chain: Endo-1,4-beta-xylanase 1 (216 aa).

The N-terminal stretch at 1-19 (MFLTSVVSLVVGAISCVSA) is a signal peptide. The GH11 domain occupies 29–216 (QMTPRNSCYG…SSGSASITVS (188 aa)). Glu112 serves as the catalytic Nucleophile. The active-site Proton donor is Glu203.

Belongs to the glycosyl hydrolase 11 (cellulase G) family.

It localises to the secreted. It catalyses the reaction Endohydrolysis of (1-&gt;4)-beta-D-xylosidic linkages in xylans.. The protein operates within glycan degradation; xylan degradation. In terms of biological role, endo-1,4-beta-xylanase involved in the hydrolysis of xylan, a major structural heterogeneous polysaccharide found in plant biomass representing the second most abundant polysaccharide in the biosphere, after cellulose. The sequence is that of Endo-1,4-beta-xylanase 1 (xyl1) from Claviceps purpurea (Ergot fungus).